Reading from the N-terminus, the 427-residue chain is UDP-N-acetylglucosamine 1-carboxyvinyltransferase (427 aa).

Residue K22–N23 participates in phosphoenolpyruvate binding. A UDP-N-acetyl-alpha-D-glucosamine-binding site is contributed by R92. Residue D116 is the Proton donor of the active site. Residues D312 and M334 each contribute to the UDP-N-acetyl-alpha-D-glucosamine site.

Belongs to the EPSP synthase family. MurA subfamily.

The protein resides in the cytoplasm. The catalysed reaction is phosphoenolpyruvate + UDP-N-acetyl-alpha-D-glucosamine = UDP-N-acetyl-3-O-(1-carboxyvinyl)-alpha-D-glucosamine + phosphate. Its pathway is cell wall biogenesis; peptidoglycan biosynthesis. In terms of biological role, cell wall formation. Adds enolpyruvyl to UDP-N-acetylglucosamine. This is UDP-N-acetylglucosamine 1-carboxyvinyltransferase from Borreliella burgdorferi (strain ATCC 35210 / DSM 4680 / CIP 102532 / B31) (Borrelia burgdorferi).